The primary structure comprises 318 residues: Transaldolase (318 aa).

Catalysis depends on Lys-132, which acts as the Schiff-base intermediate with substrate.

This sequence belongs to the transaldolase family. Type 1 subfamily. As to quaternary structure, homodimer.

The protein resides in the cytoplasm. The enzyme catalyses D-sedoheptulose 7-phosphate + D-glyceraldehyde 3-phosphate = D-erythrose 4-phosphate + beta-D-fructose 6-phosphate. It participates in carbohydrate degradation; pentose phosphate pathway; D-glyceraldehyde 3-phosphate and beta-D-fructose 6-phosphate from D-ribose 5-phosphate and D-xylulose 5-phosphate (non-oxidative stage): step 2/3. Its function is as follows. Transaldolase is important for the balance of metabolites in the pentose-phosphate pathway. In Shewanella piezotolerans (strain WP3 / JCM 13877), this protein is Transaldolase.